The primary structure comprises 72 residues: Translation initiation factor IF-1 (72 aa).

An S1-like domain is found at 1-72; sequence MSKEEVLEFS…TKGRITYRYK (72 aa).

It belongs to the IF-1 family. Component of the 30S ribosomal translation pre-initiation complex which assembles on the 30S ribosome in the order IF-2 and IF-3, IF-1 and N-formylmethionyl-tRNA(fMet); mRNA recruitment can occur at any time during PIC assembly.

The protein resides in the cytoplasm. Functionally, one of the essential components for the initiation of protein synthesis. Stabilizes the binding of IF-2 and IF-3 on the 30S subunit to which N-formylmethionyl-tRNA(fMet) subsequently binds. Helps modulate mRNA selection, yielding the 30S pre-initiation complex (PIC). Upon addition of the 50S ribosomal subunit IF-1, IF-2 and IF-3 are released leaving the mature 70S translation initiation complex. The chain is Translation initiation factor IF-1 from Bartonella quintana (strain Toulouse) (Rochalimaea quintana).